Consider the following 35-residue polypeptide: Sorbin and SH3 domain-containing protein 1 (35 aa).

The region spanning 1–8 (LNRDDDSD) is the SoHo domain. Serine 15 carries the phosphoserine modification. An SH3 domain is found at 22-35 (CDDGWFVGTSRRTK).

As to quaternary structure, interacts with the long isoform of AFDN and with VCL. AFDN and VCL bind to SORBS1 in a competitive manner and do not form a ternary complex. Interacts with ABL1, CBL, CBLB and INPPL1/SHIP2 through the third SH3 domain. Interaction with ABL1 occurs only after insulin stimulation while this has no effect on the interaction with INPPL1. Interacts with the insulin receptor but dissociates from it following insulin stimulation. Also interacts with SCA7, PTK2/FAK1 and flotillin. Interacts (via SH3 domain 2) with PXN. Interacts (via third SH3 domain) with the Ten-1 ICD form of TENM1; the interaction induces the translocation of SORBS1 to the nucleus. In terms of processing, O-glycosylated.

The protein localises to the cell junction. Its subcellular location is the adherens junction. The protein resides in the cell membrane. It is found in the cytoplasm. It localises to the cytoskeleton. The protein localises to the focal adhesion. Its subcellular location is the nucleus. The protein resides in the nucleus matrix. In terms of biological role, plays a role in tyrosine phosphorylation of CBL by linking CBL to the insulin receptor. Required for insulin-stimulated glucose transport. Involved in formation of actin stress fibers and focal adhesions. The sequence is that of Sorbin and SH3 domain-containing protein 1 from Rattus norvegicus (Rat).